The primary structure comprises 699 residues: Elongation factor G (699 aa).

Positions 8-283 constitute a tr-type G domain; that stretch reads EHIRNIGICA…AVVDFLPSPI (276 aa). GTP contacts are provided by residues 17-24, 81-85, and 135-138; these read AHIDAGKT, DTPGH, and NKMD.

It belongs to the TRAFAC class translation factor GTPase superfamily. Classic translation factor GTPase family. EF-G/EF-2 subfamily.

The protein localises to the cytoplasm. Functionally, catalyzes the GTP-dependent ribosomal translocation step during translation elongation. During this step, the ribosome changes from the pre-translocational (PRE) to the post-translocational (POST) state as the newly formed A-site-bound peptidyl-tRNA and P-site-bound deacylated tRNA move to the P and E sites, respectively. Catalyzes the coordinated movement of the two tRNA molecules, the mRNA and conformational changes in the ribosome. This is Elongation factor G from Rickettsia rickettsii.